Consider the following 574-residue polypeptide: Type II methyltransferase M.PaeR7I (574 aa).

It belongs to the N(4)/N(6)-methyltransferase family. In terms of assembly, monomer.

The catalysed reaction is a 2'-deoxyadenosine in DNA + S-adenosyl-L-methionine = an N(6)-methyl-2'-deoxyadenosine in DNA + S-adenosyl-L-homocysteine + H(+). In terms of biological role, a gamma subtype methylase, recognizes the double-stranded sequence 5'-CTCGAG-3', methylates A-5 on both strands, and protects the DNA from cleavage by the PaeR7I endonuclease. The chain is Type II methyltransferase M.PaeR7I (paeR7IM) from Pseudomonas aeruginosa.